The chain runs to 317 residues: Succinate receptor 1 (317 aa).

Over 1-23 the chain is Extracellular; that stretch reads MAQNLSCENWLATEAILNKYYLS. N-linked (GlcNAc...) asparagine glycosylation occurs at Asn4. A helical transmembrane segment spans residues 24–47; that stretch reads AFYAIEFIFGLLGNVTVVFGYLFC. Residues 48–55 lie on the Cytoplasmic side of the membrane; the sequence is MKNWNSSN. Residues 56 to 76 form a helical membrane-spanning segment; that stretch reads VYLFNLSISDFAFLCTLPILI. The Extracellular segment spans residues 77–101; the sequence is KSYANDKGTYGDVLCISNRYVLHTN. The cysteines at positions 91 and 168 are disulfide-linked. Residues 102-119 traverse the membrane as a helical segment; that stretch reads LYTSILFLTFISMDRYLL. Over 120 to 133 the chain is Cytoplasmic; it reads MKYPFREHFLQKKE. A helical membrane pass occupies residues 134 to 157; it reads FAILISLAVWALVTLEVLPMLTFI. Residues 158–180 are Extracellular-facing; sequence NSVPKEEGSNCIDYASSGNPEHN. Residues 181–204 traverse the membrane as a helical segment; that stretch reads LIYSLCLTLLGFLIPLSVMCFFYY. Topologically, residues 205 to 228 are cytoplasmic; the sequence is KMVVFLKRRSQQQATALPLDKPQR. Residues 229–246 traverse the membrane as a helical segment; it reads LVVLAVVIFSILFTPYHI. Over 247–277 the chain is Extracellular; the sequence is MRNLRIASRLDSWPQGCTQKAIKSIYTLTRP. A helical transmembrane segment spans residues 278–294; that stretch reads LAFLNSAINPIFYFLMG. Topologically, residues 295–317 are cytoplasmic; sequence DHYREMLISKFRQYFKSLTSFRT.

Belongs to the G-protein coupled receptor 1 family. In terms of tissue distribution, predominantly expressed in the kidney (proximal and distal tubules and the juxtaglomerular apparatus). Weakly expressed in liver, spleen and small intestine. Highly expressed in immature dendritic cells, expression rapidly downregulates after maturation. Also expressed in macrophages. Specifically expressed in intestinal tuft cells. Expression in whole muscle is attributable to major non-myofibrillar resident cell types, including stromal, endothelial and satellite cell populations.

The protein localises to the cell membrane. In terms of biological role, g protein-coupled receptor for succinate able to mediate signaling through Gq/GNAQ or Gi/GNAI second messengers depending on the cell type and the processes regulated. Succinate-SUCNR1 signaling serves as a link between metabolic stress, inflammation and energy homeostasis. In macrophages, plays a range of immune-regulatory roles. During inflammation, succinate-SUCNR1 signaling may act as an anti-inflammatory mediator or boost inflammation depending on the inflammatory status of cells. Hyperpolarizes M2 macrophages versus M1 phenotype through Gq signaling by regulating the transcription of genes involved in immune function. In activated M1 macrophages, plays a pro-inflammatory role in response to LPS. Expressed in dendritic cells, where it is involved in the sensing of immunological danger and enhances immunity. Mediates succinate triggered intracelleular calcium mobilization, induces migratory responses and acts in synergy with Toll-like receptor ligands for the production of proinflammatory cytokines as well as an enhancement of antigen-specific activation of helper T cells. In the small intestine, mediates the activation of tuft cells by dietary succinate and triggers type 2 immunity. In adipocytes, plays an important role in the control of energy metabolism. In response to succinate, controls leptin expression in an AMPK-JNK-CEBPA-dependent as well as circadian clock-regulated manner. In muscle tissue, is expressed in non-muscle cells and coordinates muscle remodeling in response to the succinate produced during exercise training in a paracrine manner. In retina, acts as a mediator of vessel growth during retinal development. In response to succinate, regulates the production of angiogenic factors, including VEGF, by retinal ganglion neurons. The chain is Succinate receptor 1 (Sucnr1) from Mus musculus (Mouse).